The following is a 77-amino-acid chain: Translation initiation factor IF-1, chloroplastic (77 aa).

The S1-like domain maps to 1–71 (MKEQKWIHEG…TRGRIIYRLR (71 aa)).

This sequence belongs to the IF-1 family. As to quaternary structure, component of the 30S ribosomal translation pre-initiation complex which assembles on the 30S ribosome in the order IF-2 and IF-3, IF-1 and N-formylmethionyl-tRNA(fMet); mRNA recruitment can occur at any time during PIC assembly.

Its subcellular location is the plastid. The protein resides in the chloroplast. Its function is as follows. One of the essential components for the initiation of protein synthesis. Stabilizes the binding of IF-2 and IF-3 on the 30S subunit to which N-formylmethionyl-tRNA(fMet) subsequently binds. Helps modulate mRNA selection, yielding the 30S pre-initiation complex (PIC). Upon addition of the 50S ribosomal subunit IF-1, IF-2 and IF-3 are released leaving the mature 70S translation initiation complex. The protein is Translation initiation factor IF-1, chloroplastic of Montinia caryophyllacea (Wild clove bush).